The chain runs to 150 residues: D-aminoacyl-tRNA deacylase (150 aa).

The short motif at 136-137 is the Gly-cisPro motif, important for rejection of L-amino acids element; that stretch reads GP.

The protein belongs to the DTD family. In terms of assembly, homodimer.

It is found in the cytoplasm. It carries out the reaction glycyl-tRNA(Ala) + H2O = tRNA(Ala) + glycine + H(+). The catalysed reaction is a D-aminoacyl-tRNA + H2O = a tRNA + a D-alpha-amino acid + H(+). Functionally, an aminoacyl-tRNA editing enzyme that deacylates mischarged D-aminoacyl-tRNAs. Also deacylates mischarged glycyl-tRNA(Ala), protecting cells against glycine mischarging by AlaRS. Acts via tRNA-based rather than protein-based catalysis; rejects L-amino acids rather than detecting D-amino acids in the active site. By recycling D-aminoacyl-tRNA to D-amino acids and free tRNA molecules, this enzyme counteracts the toxicity associated with the formation of D-aminoacyl-tRNA entities in vivo and helps enforce protein L-homochirality. This chain is D-aminoacyl-tRNA deacylase, found in Staphylococcus aureus (strain MRSA252).